The sequence spans 329 residues: 4-hydroxythreonine-4-phosphate dehydrogenase (329 aa).

Positions 136 and 137 each coordinate substrate. Residues histidine 166, histidine 211, and histidine 266 each coordinate a divalent metal cation. Substrate-binding residues include lysine 274, asparagine 283, and arginine 292.

This sequence belongs to the PdxA family. In terms of assembly, homodimer. Requires Zn(2+) as cofactor. Mg(2+) serves as cofactor. Co(2+) is required as a cofactor.

The protein localises to the cytoplasm. The enzyme catalyses 4-(phosphooxy)-L-threonine + NAD(+) = 3-amino-2-oxopropyl phosphate + CO2 + NADH. It participates in cofactor biosynthesis; pyridoxine 5'-phosphate biosynthesis; pyridoxine 5'-phosphate from D-erythrose 4-phosphate: step 4/5. Functionally, catalyzes the NAD(P)-dependent oxidation of 4-(phosphooxy)-L-threonine (HTP) into 2-amino-3-oxo-4-(phosphooxy)butyric acid which spontaneously decarboxylates to form 3-amino-2-oxopropyl phosphate (AHAP). This is 4-hydroxythreonine-4-phosphate dehydrogenase from Escherichia coli O139:H28 (strain E24377A / ETEC).